We begin with the raw amino-acid sequence, 336 residues long: tRNA N6-adenosine threonylcarbamoyltransferase (336 aa).

Fe cation contacts are provided by His-114 and His-118. Substrate-binding positions include 136–140, Asp-169, Gly-182, Asp-186, and Asn-275; that span reads LVSGG. Residue Asp-301 participates in Fe cation binding.

This sequence belongs to the KAE1 / TsaD family. Fe(2+) is required as a cofactor.

It is found in the cytoplasm. The enzyme catalyses L-threonylcarbamoyladenylate + adenosine(37) in tRNA = N(6)-L-threonylcarbamoyladenosine(37) in tRNA + AMP + H(+). In terms of biological role, required for the formation of a threonylcarbamoyl group on adenosine at position 37 (t(6)A37) in tRNAs that read codons beginning with adenine. Is involved in the transfer of the threonylcarbamoyl moiety of threonylcarbamoyl-AMP (TC-AMP) to the N6 group of A37, together with TsaE and TsaB. TsaD likely plays a direct catalytic role in this reaction. The protein is tRNA N6-adenosine threonylcarbamoyltransferase of Streptococcus sanguinis (strain SK36).